Consider the following 1594-residue polypeptide: MRTRFLNIDYFSTPPSHVFETLGFLNLPAPDNFPAPIVYNGEEDRLRFGSIENVSIPIGNLPIEAALSKFLSDVVPDRVSVDYRVFEIDDSSLGVYYSDEKDDGDAIADKATPKIIELETPELDFEMENKLLCTSEDHLQCFSEVLEIKNDPVKYEGSDIILQNSKDIQEQIYSVDYIPSDYFTENNTSVAENECFRKIQPWFKDARFPLLEVDEVNLSELSSLSVLDKVFTVLETIEPQDTNAGSSLIINSKELIGSKDYDLLDVLSTDCYLNKSGQSDVVPEDEFSEMDIVTILEISNAEEFQGKVAVPVTYEEFQILDVDISDVFDIFLCLQKAIEPEICYGMFSKEMNFKDFDELVVSSELAFTDDAFKSLPTPILHDYEMTRSLELIYEDVLSKIKPQSLSASNDIYLPWNLLEERNHNHCDYPFEEIVTFNIDYNWEASEGDKWVYDFIFSEDAFCEPLVEKCTEPFYGISNLDEHAPVNTSHGLLENPFQKTGARDCAVDDNAKKATLLFKSMSAFDDLTFFMDPKKAVIEDNLESRVEAAKTTNHKCMSIDSKASCRSGGMHPNPKTEEMILHSVRPSENIQALVGEFVKSYLTLVKDESENLSEDKLKLLSISKGKLIDCIRKANVHKTQLADDKTFTFALLLAIKQMTWYMCFFGIHVAYIYLNKVCRSSNPMKIGLHTLYSAVETEHKSDETDITRSHPSLAVIQGILQSEFARGNSKALLLAEKVFWSSLKRLLMSMGLSYNDLNSPSPSGNRPNVHEAIELGFLPISDCLIISYEQISPSFPVENFSVIVEYGGPNASPRYSFPSKLDSFPSFHFIKVELDMPSACGQLCAGVTVPYSLKMIKGDEVETKTGWLEEVLNFVPLEKVCYAGSSETTNESEFISMPQESERKRGIIEQGLSDQRSVIVVNTKTVDKEMIISRRSTYQKVLAMEKEGVQVVERDSDLPVDLMLSPAVCLLWYDSETVSKKSAATIGTSSSSLSWIGDIATNVLTSLSFSFSTCIMVFEGEPAFLAAVMDSSDELYAAAGSLGISLQMFCSSSANLTDEIILKCIKSSVKLSKLHVKMPESESLAESFLTKFPSVNPLTAQVILSSSGSLLEFMKLPHKSKVERTQKYHVPEESVDLFSSVCRYGAREDSRSVMTDSSSSVSSGPDSDTHHVSVHSGSKKKQYIAEKDEIDMDDLVHFSPSIEFADTQLKSSGDFQLDDSWSSKDHEIFHFDPVTEFSDAPFKPSGISHPNDSWPSKDPERFDKKSGPGSSSKDTFWEKDQPDFSVEDSLPGIPELEDWSFPVKDKFMSQNRGCKFPVMRDFNLHDNRNSENFIADYKGEVIDRADKYLEEDFPPSPGYNRFARIVSDVNEEELPRKSKSSRKLSFFGSLQPNFPKAADIDSSSERYATEKDSKYDNNTSLRGYADNYPAKRQRTLLEEVLTRRSAVPTTELPFREEISHFGGSPLSNAIRSSNQVQSSPWTVDFLNRVRERSRARKQQQSLPSYASPPSLETPGNIKKANTKRKSPSILEFFKYKGGNKLQEEKRQKRSKNSSASPKNERFYSPLKSCTPIDKRAKQSLSYTANGTGQTKLVWK.

Disordered stretches follow at residues 1148–1180 (DSRSVMTDSSSSVSSGPDSDTHHVSVHSGSKKK), 1239–1283 (APFK…QPDF), 1396–1426 (AADIDSSSERYATEKDSKYDNNTSLRGYADN), 1491–1523 (RSRARKQQQSLPSYASPPSLETPGNIKKANTKR), and 1536–1594 (GGNK…LVWK). Over residues 1151-1165 (SVMTDSSSSVSSGPD) the composition is skewed to low complexity. Composition is skewed to basic and acidic residues over residues 1254–1265 (PSKDPERFDKKS) and 1402–1414 (SSERYATEKDSKY). A compositionally biased stretch (polar residues) spans 1577-1594 (QSLSYTANGTGQTKLVWK).

Belongs to the XPF family. As to quaternary structure, interacts with PTD. In terms of tissue distribution, highest levels in young buds, where male meiosis occurs. Also present at low levels in plantlets, leaves, flowers, and roots.

It is found in the nucleus. Its function is as follows. Essential for the formation of class I meiotic crossovers. The sequence is that of Protein SHORTAGE IN CHIASMATA 1 from Arabidopsis thaliana (Mouse-ear cress).